The following is a 122-amino-acid chain: Large ribosomal subunit protein uL14 (122 aa).

This sequence belongs to the universal ribosomal protein uL14 family. As to quaternary structure, part of the 50S ribosomal subunit. Forms a cluster with proteins L3 and L19. In the 70S ribosome, L14 and L19 interact and together make contacts with the 16S rRNA in bridges B5 and B8.

In terms of biological role, binds to 23S rRNA. Forms part of two intersubunit bridges in the 70S ribosome. This chain is Large ribosomal subunit protein uL14, found in Mycoplasma pneumoniae (strain ATCC 29342 / M129 / Subtype 1) (Mycoplasmoides pneumoniae).